Reading from the N-terminus, the 706-residue chain is Dual specificity calcium/calmodulin-dependent 3',5'-cyclic nucleotide phosphodiesterase 1C (706 aa).

Met-1 is modified (N-acetylmethionine). Residues Glu-123–Arg-146 form a calmodulin-binding region. One can recognise a PDEase domain in the interval Val-151–Glu-528. Residue His-228 is the Proton donor of the active site. The Zn(2+) site is built by His-232, His-268, Asp-269, and Asp-376. Position 269 (Asp-269) interacts with Mg(2+). 2 disordered regions span residues Leu-453–Ser-497 and Lys-524–Pro-655. Polar residues-rich tracts occupy residues Glu-456–Ser-476 and Val-483–Ser-497. 3 stretches are compositionally biased toward basic and acidic residues: residues Lys-524–Ser-554, Arg-580–Glu-597, and Asp-603–Lys-630. The segment covering Ala-638–Ile-647 has biased composition (polar residues).

Belongs to the cyclic nucleotide phosphodiesterase family. PDE1 subfamily. In terms of assembly, homodimer. Zn(2+) is required as a cofactor. Mg(2+) serves as cofactor. Highly expressed in testis and at moderate levels in heart. As to expression, expressed at a moderate level in brain, the cerebellum, testis, heart and olfactory epithelium. In terms of tissue distribution, highly expressed in olfactory epithelium and at very low levels, if any, in other tissues. In the cochlea, expressed in the inner and outer hair cells (at protein level). In the brain, highly expressed in the neurons of the granule layer of the cerebellum, some Purkinje cells, the central amygdaloid nucleus, and the interpolar spinal trigem nucleus and, at moderate levels, in the glomerular and external plexiform layer of the olfactory bulb as well as in parts of the caudate-putamen and olfactory tubercle.

The protein localises to the lysosome. The catalysed reaction is a nucleoside 3',5'-cyclic phosphate + H2O = a nucleoside 5'-phosphate + H(+). It catalyses the reaction 3',5'-cyclic GMP + H2O = GMP + H(+). The enzyme catalyses 3',5'-cyclic AMP + H2O = AMP + H(+). Its activity is regulated as follows. Type I PDE are activated by the binding of calmodulin in the presence of Ca(2+). Different splice variants may have different sensitivities to Ca(2+). Exhibits a higher sensitivity to Ca(2+) stimulation than isoforms 1 and 2. Its function is as follows. Calmodulin-dependent cyclic nucleotide phosphodiesterase with a dual specificity for cAMP and cGMP, which are key regulators of many important physiological processes. Exhibits high affinity for both cAMP and cGMP. Modulates the amplitude and duration of the cAMP signal in sensory cilia in response to odorant stimulation, hence contributing to the generation of action potentials. Regulates smooth muscle cell proliferation. Regulates the stability of growth factor receptors, including PDGFRB. In Mus musculus (Mouse), this protein is Dual specificity calcium/calmodulin-dependent 3',5'-cyclic nucleotide phosphodiesterase 1C.